The chain runs to 305 residues: Serine/threonine-protein kinase 16 (305 aa).

Glycine 2 carries the N-myristoyl glycine lipid modification. Residues cysteine 6 and cysteine 8 are each lipidated (S-palmitoyl cysteine). One can recognise a Protein kinase domain in the interval 20–293; sequence YLFVQKLGEG…PVLLSQLEAL (274 aa). Residues 26-34 and lysine 49 each bind ATP; that span reads LGEGGFSYV. Aspartate 148 functions as the Proton acceptor in the catalytic mechanism. The activation loop stretch occupies residues 166 to 202; that stretch reads DLGSMNQACIQVEGSRQALALQDWAAQRCTISYRAPE. Serine 197 is modified (phosphoserine; by autocatalysis). Position 198 is a phosphotyrosine; by autocatalysis (tyrosine 198).

This sequence belongs to the protein kinase superfamily. Ser/Thr protein kinase family. As to quaternary structure, monomer. Interacts with DRG1 (via its N-terminal); the interaction phosphorylates DRG1. In terms of processing, mainly autophosphorylated on serine/threonine residues. Also autophosphorylated on Tyr-198. Expressed in heart, liver, brain, spleen, lung, skeletal muscle, kidney and testis.

The protein localises to the cytoplasm. It localises to the perinuclear region. Its subcellular location is the membrane. The catalysed reaction is L-seryl-[protein] + ATP = O-phospho-L-seryl-[protein] + ADP + H(+). The enzyme catalyses L-threonyl-[protein] + ATP = O-phospho-L-threonyl-[protein] + ADP + H(+). It carries out the reaction L-tyrosyl-[protein] + ATP = O-phospho-L-tyrosyl-[protein] + ADP + H(+). Membrane-associated protein kinase that phosphorylates on serine and threonine residues. In vitro substrates include DRG1, ENO1 and EIF4EBP1. Also autophosphorylates. May be involved in secretory vesicle trafficking or intracellular signaling. May have a role in regulating stromal-epithelial interactions that occur during ductal morphogenesis in the mammary gland. May be involved in TGF-beta signaling. Able to autophosphorylate on Tyr residue; it is however unclear whether it has tyrosine-protein kinase toward other proteins. The sequence is that of Serine/threonine-protein kinase 16 (Stk16) from Rattus norvegicus (Rat).